The chain runs to 524 residues: Putative ATP-dependent RNA helicase R458 (524 aa).

The Helicase ATP-binding domain maps to 125 to 338 (VPELIQRKDT…NSYFRKYSPI (214 aa)). Residue 138–145 (FKSGTGKT) coordinates ATP. A DEFD box motif is present at residues 268-271 (DEFD). In terms of domain architecture, Helicase C-terminal spans 373–524 (IILDLLKQCR…QLPGDLSTLL (152 aa)).

This sequence belongs to the DEAD box helicase family. eIF4A subfamily.

It carries out the reaction ATP + H2O = ADP + phosphate + H(+). Putative ATP-dependent RNA helicase. The sequence is that of Putative ATP-dependent RNA helicase R458 from Acanthamoeba polyphaga mimivirus (APMV).